The sequence spans 89 residues: Cell division protein FtsL (89 aa).

Residues 1–22 (MIDRKHYHLVGSIGKDILNNGK) are Cytoplasmic-facing. The chain crosses the membrane as a helical span at residues 23–40 (LPALLLIAVLASSSLVVI). At 41-89 (TTYQTRRLTVEREQLLLEQNILDIEWRNLILEDNVISDQSRFEFVATEQ) the chain is on the periplasmic side.

Belongs to the FtsL family. As to quaternary structure, part of a complex composed of FtsB, FtsL and FtsQ.

Its subcellular location is the cell inner membrane. Essential cell division protein. May link together the upstream cell division proteins, which are predominantly cytoplasmic, with the downstream cell division proteins, which are predominantly periplasmic. The protein is Cell division protein FtsL of Moranella endobia (strain PCIT).